A 124-amino-acid polypeptide reads, in one-letter code: UPF0738 protein GWCH70_0774 (124 aa).

It belongs to the UPF0738 family.

This chain is UPF0738 protein GWCH70_0774, found in Geobacillus sp. (strain WCH70).